Consider the following 592-residue polypeptide: MASEHIEHKLALLPALPGCYLMKDINAQIIYVGKAKNLKNRVRSYFKSSHEGKTAKLVSEIVDFETIITSTNKEAFLLEITLIQKHQPYFNIKLKRGTGYPYIKITNERDPRLLITGDVKKDGSYYFGPYPDVYAAQETLRFLQRVYPLRRCQGHQGRPCLYYHMGQCLGACFQEVPEAAYTEQIKKIKRFLNGQVDNVKKDLTEKMATAAQEMQFERAAELRDQLRYIEATVEKQKIISNDHTPRDLFAFYMDKGWLSIQIFFIRQARLIRREKRLFPCVNTPEEELATFILQWYNRKNNVLPREILVPDGIEKQVLSDILQVPIRTPQRGEKKALMEMAQKNSRLVLEEKFRLLELDNRKTVGAQDEIMDALGLPHGHVIEAFDHSHIQGTDPVSAMVTFVDGRAEKKLYRKYKLTQTAERAGANEDANTREVIYRRYSRLLKEGKALPDLILMDGGVVELNAAKDVLENELGLTIPVAGMVKDNHHKTASLLFGEADQTIQLDPKSQGFYLLTRIQDEVHRFAISFHRQLRGKNSLSSKLDDIKGVGPKTRTKLLKNFGSMKHIKDASVEELEALGISKTVAQTIKLSL.

One can recognise a GIY-YIG domain in the interval 15–92; that stretch reads ALPGCYLMKD…IQKHQPYFNI (78 aa). One can recognise a UVR domain in the interval 197-232; sequence DNVKKDLTEKMATAAQEMQFERAAELRDQLRYIEAT.

The protein belongs to the UvrC family. Interacts with UvrB in an incision complex.

Its subcellular location is the cytoplasm. The UvrABC repair system catalyzes the recognition and processing of DNA lesions. UvrC both incises the 5' and 3' sides of the lesion. The N-terminal half is responsible for the 3' incision and the C-terminal half is responsible for the 5' incision. The chain is UvrABC system protein C from Latilactobacillus sakei subsp. sakei (strain 23K) (Lactobacillus sakei subsp. sakei).